The primary structure comprises 60 residues: Snake venom metalloproteinase bothrojaractivase (60 aa).

The 60-residue stretch at 1-60 (RYIELAVVADHGMFTKYRVHELVNTVNGFFRSKQDLIKVQKDKTLTSFGEWRERDLLPRI) folds into the Peptidase M12B domain. E4 provides a ligand contact to Ca(2+).

It belongs to the venom metalloproteinase (M12B) family. P-I subfamily. In terms of assembly, monomer. Zn(2+) is required as a cofactor. In terms of tissue distribution, expressed by the venom gland.

It localises to the secreted. Its activity is regulated as follows. Completely inhibited by EDTA and EGTA. Partially inhibited by serine proteinase inhibitors PMSF and benzamidine. Not inhibited by cysteine proteinase inhibitors mercury ions and E-64. Is active without cofactors, although the presence of low concentrations of calcium and zinc ions enhanced its ability to convert prothrombin (F2) into active thrombin. Its function is as follows. Prothrombin (F2) activator that is cofactor-independent. Also has fibrinolytic and fibrinogenolytic activity. It degrades the Aalpha-chain and more slowly the Bbeta-chain of fibrin and fibrinogen, while the gamma-chain is only partially and slowly affected. A dose-dependent procoagulant activity is shown in human plasma. This is Snake venom metalloproteinase bothrojaractivase from Bothrops jararaca (Jararaca).